Reading from the N-terminus, the 422-residue chain is Cyclin-A2 (422 aa).

The residue at position 1 (Met-1) is an N-acetylmethionine. The interval 1–62 (MPGTSRHSGR…APQQKLKTRR (62 aa)) is disordered. Ser-5 carries the phosphoserine modification.

The protein belongs to the cyclin family. Cyclin AB subfamily. As to quaternary structure, interacts with the CDK1 and CDK2 protein kinases to form serine/threonine kinase holoenzyme complexes. Interacts with CDK1 (hyperphosphorylated form in G1 and underphosphorylated forms in S and G2). Interacts with CDK2; the interaction increases from G1 to G2. Interacts (associated with CDK2 but not with CDK1) with SCAPER; regulates the activity of CCNA2/CDK2 by transiently maintaining CCNA2 in the cytoplasm. Forms a ternary complex with CDK2 and CDKN1B; CDKN1B inhibits the kinase activity of CDK2 through conformational rearrangements. Interacts with INCA1. In terms of assembly, (Microbial infection) Interacts with mouse cytomegalovirus/MCMV kinase M97; this interaction sequesters CCNA2 to the cytoplasm. Polyubiquitinated via 'Lys-11'-linked ubiquitin by the anaphase-promoting complex (APC/C), leading to its degradation by the proteasome. Deubiquitinated and stabilized by USP37 enables entry into S phase. Ubiquitinated during the G1 phase by the SCF(FBXO31) complex, leading to its proteasomal degradation. Ubiquitous. In the testis, expressed in germ cells and in the ovary, in both germline and somatic cells.

The protein resides in the nucleus. It is found in the cytoplasm. Functionally, cyclin which controls both the G1/S and the G2/M transition phases of the cell cycle. Functions through the formation of specific serine/threonine kinase holoenzyme complexes with the cyclin-dependent protein kinases CDK1 and CDK2. The cyclin subunit confers the substrate specificity of these complexes and differentially interacts with and activates CDK1 and CDK2 throughout the cell cycle. This is Cyclin-A2 from Mus musculus (Mouse).